The following is a 430-amino-acid chain: Septin-14 (430 aa).

A Septin-type G domain is found at 48-313 (KGFSFNILCV…ECYRSNRLQK (266 aa)). The segment at 58–65 (GETGIGKT) is G1 motif. Residues 58–65 (GETGIGKT), Gly-113, 194–202 (KADSLSKND), Gly-246, and Arg-261 each bind GTP. The interval 110–113 (KTVG) is G3 motif. The tract at residues 193–196 (AKAD) is G4 motif. Positions 329 to 410 (QEMYEAKRRE…IIDFYKMKAA (82 aa)) form a coiled coil. The required for interaction with SEPTIN4. Required for migration of cortical neurons during corticogenesis stretch occupies residues 367-430 (DAEKELQDKF…NIKKDKDRKK (64 aa)).

The protein belongs to the TRAFAC class TrmE-Era-EngA-EngB-Septin-like GTPase superfamily. Septin GTPase family. In terms of assembly, septins polymerize into heterooligomeric protein complexes that form filaments, and can associate with cellular membranes, actin filaments and microtubules. GTPase activity is required for filament formation. Interacts with ACTN4. Interacts with SEPTIN9. Interacts (via C-terminus) with SEPTIN4. As to expression, expressed in the testis and brain including the cerebrum, hippocampus and cerebellum (at protein level).

Its subcellular location is the cytoplasm. It localises to the cytoskeleton. It is found in the cell projection. The protein localises to the axon. The protein resides in the dendrite. Its subcellular location is the perikaryon. It localises to the perinuclear region. It is found in the cytoplasmic vesicle. The protein localises to the secretory vesicle. The protein resides in the acrosome. Its function is as follows. Filament-forming cytoskeletal GTPase. Involved in the migration of cortical neurons and the formation of neuron leading processes during embryonic development. Plays a role in sperm head formation during spermiogenesis, potentially via facilitating localization of ACTN4 to cell filaments. This is Septin-14 from Mus musculus (Mouse).